We begin with the raw amino-acid sequence, 594 residues long: MASSTPSSSATSSNAGADPNTTNLRPTTYDTWCGVAHGCTRKLGLKICGFLQRTNSLEEKSRLVSAFKERQSSKNLLSCENSDRDARFRRTETDFSNLFARDLLPAKNGEEQTVQFLLEVVDILLNYVRKTFDRSTKVLDFHHPHQLLEGMEGFNLELSDHPESLEQILVDCRDTLKYGVRTGHPRFFNQLSTGLDIIGLAGEWLTSTANTNMFTYEIAPVFVLMEQITLKKMREIVGWSSKDGDGIFSPGGAISNMYSIMAARYKYFPEVKTKGMAAVPKLVLFTSEHSHYSIKKAGAALGFGTDNVILIKCNERGKIIPADFEAKILEAKQKGYVPFYVNATAGTTVYGAFDPIQEIADICEKYNLWLHVDAAWGGGLLMSRKHRHKLNGIERANSVTWNPHKMMGVLLQCSAILVKEKGILQGCNQMCAGYLFQPDKQYDVSYDTGDKAIQCGRHVDIFKFWLMWKAKGTVGFENQINKCLELAEYLYAKIKNREEFEMVFNGEPEHTNVCFWYIPQSLRGVPDSPQRREKLHKVAPKIKALMMESGTTMVGYQPQGDKANFFRMVISNPAATQSDIDFLIEEIERLGQDL.

The span at 1–13 (MASSTPSSSATSS) shows a compositional bias: low complexity. Residues 1 to 23 (MASSTPSSSATSSNAGADPNTTN) are disordered. Ser-78 is modified (phosphoserine). Residue 190-192 (QLS) coordinates 4-aminobutanoate. Lys-405 carries the post-translational modification N6-(pyridoxal phosphate)lysine. Arg-567 contributes to the 4-aminobutanoate binding site.

This sequence belongs to the group II decarboxylase family. As to quaternary structure, homodimer. The cofactor is pyridoxal 5'-phosphate.

It catalyses the reaction L-glutamate + H(+) = 4-aminobutanoate + CO2. In terms of biological role, catalyzes the synthesis of the inhibitory neurotransmitter gamma-aminobutyric acid (GABA) with pyridoxal 5'-phosphate as cofactor. The sequence is that of Glutamate decarboxylase 1 (GAD1) from Pongo abelii (Sumatran orangutan).